The sequence spans 324 residues: Probable non-intrinsic ABC protein 5 (324 aa).

The region spanning 2–111 is the ABC transporter domain; it reads DRERYDKVIE…ADLTLVMKDG (110 aa). Helical transmembrane passes span 212 to 232 and 259 to 279; these read YITLAYGGALVPFILLGQILF and LSTLMVVYVALAFGSSLCILV. Positions 222–324 constitute an ABC transmembrane type-1 domain; the sequence is VPFILLGQIL…TCSKTCIYSS (103 aa).

Belongs to the ABC transporter superfamily.

It localises to the membrane. This Arabidopsis thaliana (Mouse-ear cress) protein is Probable non-intrinsic ABC protein 5 (NAP5).